Here is a 581-residue protein sequence, read N- to C-terminus: Polypeptide N-acetylgalactosaminyltransferase 12 (581 aa).

Topologically, residues 1 to 19 are cytoplasmic; it reads MWGRTARRRCPRELRRGRE. The helical; Signal-anchor for type II membrane protein transmembrane segment at 20–37 threads the bilayer; that stretch reads ALLVLLALLALAGLGSVL. At 38–581 the chain is on the lumenal side; the sequence is RAQRGAGAGA…QKWFFKERML (544 aa). The tract at residues 43-67 is disordered; it reads AGAGAAEPGPPRTPRPGRREPVMPR. Intrachain disulfides connect cysteine 125–cysteine 358, cysteine 349–cysteine 422, cysteine 458–cysteine 479, cysteine 506–cysteine 521, and cysteine 547–cysteine 566. The segment at 135–244 is catalytic subdomain A; sequence LPRTSVIIAF…EGWLEPLLQR (110 aa). 2 residues coordinate substrate: aspartate 176 and arginine 205. Residues aspartate 228 and histidine 230 each contribute to the Mn(2+) site. A catalytic subdomain B region spans residues 304-366; sequence VIRSPTMAGG…PCSHVGHVFP (63 aa). Tryptophan 335 provides a ligand contact to substrate. Histidine 363 contributes to the Mn(2+) binding site. Tyrosine 371 lines the substrate pocket. One can recognise a Ricin B-type lectin domain in the interval 445 to 577; that stretch reads FFGMLQNKGL…NSDHQKWFFK (133 aa).

Belongs to the glycosyltransferase 2 family. GalNAc-T subfamily. Mn(2+) is required as a cofactor. As to expression, widely expressed at different levels of expression. Highly expressed in digestive organs such as small intestine, stomach, pancreas and colon. Expressed at intermediate level in testis, thyroid gland and spleen. Weakly expressed in whole brain, cerebral cortex, cerebellum, fetal brain, bone marrow, thymus, leukocytes, heart, skeletal muscle, liver, lung, esophagus, kidney, adrenal gland, mammary gland, uterus, placenta, ovary and prostate.

Its subcellular location is the golgi apparatus membrane. The catalysed reaction is L-seryl-[protein] + UDP-N-acetyl-alpha-D-galactosamine = a 3-O-[N-acetyl-alpha-D-galactosaminyl]-L-seryl-[protein] + UDP + H(+). The enzyme catalyses L-threonyl-[protein] + UDP-N-acetyl-alpha-D-galactosamine = a 3-O-[N-acetyl-alpha-D-galactosaminyl]-L-threonyl-[protein] + UDP + H(+). It functions in the pathway protein modification; protein glycosylation. Catalyzes the initial reaction in O-linked oligosaccharide biosynthesis, the transfer of an N-acetyl-D-galactosamine residue to a serine or threonine residue on the protein receptor. Has activity toward non-glycosylated peptides such as Muc5AC, Muc1a and EA2, and no detectable activity with Muc2 and Muc7. Displays enzymatic activity toward the Gal-NAc-Muc5AC glycopeptide, but no detectable activity to mono-GalNAc-glycosylated Muc1a, Muc2, Muc7 and EA2. May play an important role in the initial step of mucin-type oligosaccharide biosynthesis in digestive organs. This is Polypeptide N-acetylgalactosaminyltransferase 12 (GALNT12) from Homo sapiens (Human).